The chain runs to 176 residues: Cytidylate kinase (176 aa).

7–15 (GPPGSGTTS) is an ATP binding site.

The protein belongs to the cytidylate kinase family. Type 2 subfamily.

The protein localises to the cytoplasm. It carries out the reaction CMP + ATP = CDP + ADP. The catalysed reaction is dCMP + ATP = dCDP + ADP. The sequence is that of Cytidylate kinase from Methanosphaerula palustris (strain ATCC BAA-1556 / DSM 19958 / E1-9c).